Reading from the N-terminus, the 69-residue chain is Cytochrome c oxidase subunit 8A, mitochondrial (69 aa).

The transit peptide at 1–25 directs the protein to the mitochondrion; that stretch reads MSVLTPLLLRGLTGPARRLPVPRAQ. An SIFI-degron motif is present at residues 2–19; it reads SVLTPLLLRGLTGPARRL. Residues 26–36 lie on the Mitochondrial matrix side of the membrane; sequence IHSKPPREQLG. A helical transmembrane segment spans residues 37–60; that stretch reads TMDIAIGLTSCFLCFLLPSGWVLS. At 61 to 69 the chain is on the mitochondrial intermembrane side; it reads HMENYKKRE.

The protein belongs to the cytochrome c oxidase VIII family. Component of the cytochrome c oxidase (complex IV, CIV), a multisubunit enzyme composed of 14 subunits. The complex is composed of a catalytic core of 3 subunits MT-CO1, MT-CO2 and MT-CO3, encoded in the mitochondrial DNA, and 11 supernumerary subunits COX4I1 (or COX4I2), COX5A, COX5B, COX6A2 (or COX6A1), COX6B1 (or COX6B2), COX6C, COX7A1 (or COX7A2), COX7B, COX7C, COX8B and NDUFA4, which are encoded in the nuclear genome. The complex exists as a monomer or a dimer and forms supercomplexes (SCs) in the inner mitochondrial membrane with NADH-ubiquinone oxidoreductase (complex I, CI) and ubiquinol-cytochrome c oxidoreductase (cytochrome b-c1 complex, complex III, CIII), resulting in different assemblies (supercomplex SCI(1)III(2)IV(1) and megacomplex MCI(2)III(2)IV(2)). In terms of processing, in response to mitochondrial stress, the precursor protein is ubiquitinated by the SIFI complex in the cytoplasm before mitochondrial import, leading to its degradation. Within the SIFI complex, UBR4 initiates ubiquitin chain that are further elongated or branched by KCMF1.

The protein localises to the mitochondrion inner membrane. The protein operates within energy metabolism; oxidative phosphorylation. Its function is as follows. Component of the cytochrome c oxidase, the last enzyme in the mitochondrial electron transport chain which drives oxidative phosphorylation. The respiratory chain contains 3 multisubunit complexes succinate dehydrogenase (complex II, CII), ubiquinol-cytochrome c oxidoreductase (cytochrome b-c1 complex, complex III, CIII) and cytochrome c oxidase (complex IV, CIV), that cooperate to transfer electrons derived from NADH and succinate to molecular oxygen, creating an electrochemical gradient over the inner membrane that drives transmembrane transport and the ATP synthase. Cytochrome c oxidase is the component of the respiratory chain that catalyzes the reduction of oxygen to water. Electrons originating from reduced cytochrome c in the intermembrane space (IMS) are transferred via the dinuclear copper A center (CU(A)) of subunit 2 and heme A of subunit 1 to the active site in subunit 1, a binuclear center (BNC) formed by heme A3 and copper B (CU(B)). The BNC reduces molecular oxygen to 2 water molecules using 4 electrons from cytochrome c in the IMS and 4 protons from the mitochondrial matrix. This is Cytochrome c oxidase subunit 8A, mitochondrial (COX8A) from Bos taurus (Bovine).